Consider the following 207-residue polypeptide: uncharacterized protein (207 aa).

It to M.leprae ML1660.

This is an uncharacterized protein from Mycobacterium tuberculosis (strain CDC 1551 / Oshkosh).